We begin with the raw amino-acid sequence, 264 residues long: Thymidylate synthase (264 aa).

R21 provides a ligand contact to dUMP. H51 lines the (6R)-5,10-methylene-5,6,7,8-tetrahydrofolate pocket. Residue 126-127 (RR) coordinates dUMP. The Nucleophile role is filled by C146. DUMP contacts are provided by residues 166–169 (RSCD), N177, and 207–209 (HLY). D169 contributes to the (6R)-5,10-methylene-5,6,7,8-tetrahydrofolate binding site. Position 263 (A263) interacts with (6R)-5,10-methylene-5,6,7,8-tetrahydrofolate.

This sequence belongs to the thymidylate synthase family. Bacterial-type ThyA subfamily. Homodimer.

The protein resides in the cytoplasm. The catalysed reaction is dUMP + (6R)-5,10-methylene-5,6,7,8-tetrahydrofolate = 7,8-dihydrofolate + dTMP. It functions in the pathway pyrimidine metabolism; dTTP biosynthesis. In terms of biological role, catalyzes the reductive methylation of 2'-deoxyuridine-5'-monophosphate (dUMP) to 2'-deoxythymidine-5'-monophosphate (dTMP) while utilizing 5,10-methylenetetrahydrofolate (mTHF) as the methyl donor and reductant in the reaction, yielding dihydrofolate (DHF) as a by-product. This enzymatic reaction provides an intracellular de novo source of dTMP, an essential precursor for DNA biosynthesis. The chain is Thymidylate synthase from Shewanella amazonensis (strain ATCC BAA-1098 / SB2B).